A 193-amino-acid chain; its full sequence is Adenine phosphoribosyltransferase (193 aa).

Belongs to the purine/pyrimidine phosphoribosyltransferase family. Homodimer.

Its subcellular location is the cytoplasm. It carries out the reaction AMP + diphosphate = 5-phospho-alpha-D-ribose 1-diphosphate + adenine. Its pathway is purine metabolism; AMP biosynthesis via salvage pathway; AMP from adenine: step 1/1. Catalyzes a salvage reaction resulting in the formation of AMP, that is energically less costly than de novo synthesis. This chain is Adenine phosphoribosyltransferase, found in Chromobacterium violaceum (strain ATCC 12472 / DSM 30191 / JCM 1249 / CCUG 213 / NBRC 12614 / NCIMB 9131 / NCTC 9757 / MK).